We begin with the raw amino-acid sequence, 343 residues long: Aldehyde reductase 2 (343 aa).

Tyr177 is a binding site for NADP(+).

The protein belongs to the NAD(P)-dependent epimerase/dehydratase family. Dihydroflavonol-4-reductase subfamily. In terms of assembly, monomer.

It catalyses the reaction a primary alcohol + NADP(+) = an aldehyde + NADPH + H(+). Inhibited by quercetin and diphenylhydantoin. In terms of biological role, catalyzes the asymmetric reduction of o-substituted aliphatic and aromatic aldehydes and ketones to an S-enantiomer. Reduces ethyl 4-chloro-3-oxobutanoate to ethyl (S)-4-chloro-3-hydroxybutanoate. This is Aldehyde reductase 2 from Sporidiobolus salmonicolor (Yeast-like fungus).